The primary structure comprises 317 residues: SWI/SNF-related matrix-associated actin-dependent regulator of chromatin subfamily E member 1-related (317 aa).

Residues 1 to 22 are compositionally biased toward low complexity; sequence MSHGPKQPGAASAPASGKAPGQ. The tract at residues 1–71 is disordered; sequence MSHGPKQPGA…RKKILPNGPK (71 aa). K31 is covalently cross-linked (Glycyl lysine isopeptide (Lys-Gly) (interchain with G-Cter in SUMO2)). Positions 31–52 are enriched in basic and acidic residues; sequence KQERGEGPRAGEKGSHEEEPVK. A compositionally biased stretch (basic residues) spans 53–65; it reads KRGWPKGKKRKKI. Residues 70–138 constitute a DNA-binding region (HMG box); that stretch reads PKAPVTGYVR…QYMKELRAYQ (69 aa). S160 bears the Phosphoserine mark. Residues 190–257 are a coiled coil; the sequence is EEFLDQNKAR…LQQQLQAVRQ (68 aa).

As to quaternary structure, component of a BHC histone deacetylase complex that contains HDAC1, HDAC2, HMG20B/BRAF35, KDM1A, RCOR1/CoREST and PHF21A/BHC80. The BHC complex may also contain ZMYM2, ZNF217, ZMYM3, GSE1 and GTF2I. Interacts with the BRCA2 tumor suppressor protein.

It localises to the nucleus. Its subcellular location is the chromosome. Required for correct progression through G2 phase of the cell cycle and entry into mitosis. Required for RCOR1/CoREST mediated repression of neuronal specific gene promoters. This Bos taurus (Bovine) protein is SWI/SNF-related matrix-associated actin-dependent regulator of chromatin subfamily E member 1-related (HMG20B).